We begin with the raw amino-acid sequence, 273 residues long: Dermonecrotic toxin LapSicTox-alphaIB1aiii (273 aa).

Residue His-5 is part of the active site. The Mg(2+) site is built by Glu-25 and Asp-27. The active-site Nucleophile is His-41. 2 disulfide bridges follow: Cys-45–Cys-51 and Cys-47–Cys-190. Asp-85 lines the Mg(2+) pocket. An N-linked (GlcNAc...) asparagine glycan is attached at Asn-250.

It belongs to the arthropod phospholipase D family. Class II subfamily. It depends on Mg(2+) as a cofactor. In terms of tissue distribution, expressed by the venom gland.

Its subcellular location is the secreted. The catalysed reaction is an N-(acyl)-sphingosylphosphocholine = an N-(acyl)-sphingosyl-1,3-cyclic phosphate + choline. The enzyme catalyses an N-(acyl)-sphingosylphosphoethanolamine = an N-(acyl)-sphingosyl-1,3-cyclic phosphate + ethanolamine. It carries out the reaction a 1-acyl-sn-glycero-3-phosphocholine = a 1-acyl-sn-glycero-2,3-cyclic phosphate + choline. It catalyses the reaction a 1-acyl-sn-glycero-3-phosphoethanolamine = a 1-acyl-sn-glycero-2,3-cyclic phosphate + ethanolamine. In terms of biological role, dermonecrotic toxins cleave the phosphodiester linkage between the phosphate and headgroup of certain phospholipids (sphingolipid and lysolipid substrates), forming an alcohol (often choline) and a cyclic phosphate. This toxin acts on sphingomyelin (SM). It may also act on ceramide phosphoethanolamine (CPE), lysophosphatidylcholine (LPC) and lysophosphatidylethanolamine (LPE), but not on lysophosphatidylserine (LPS), and lysophosphatidylglycerol (LPG). It acts by transphosphatidylation, releasing exclusively cyclic phosphate products as second products. Induces dermonecrosis, hemolysis, increased vascular permeability, edema, inflammatory response, and platelet aggregation. The polypeptide is Dermonecrotic toxin LapSicTox-alphaIB1aiii (Loxosceles apachea (Apache recluse spider)).